A 127-amino-acid polypeptide reads, in one-letter code: Probable toxin y4kH (127 aa).

It belongs to the MbcT/ParT/Res family.

Probable toxic component of a type II toxin-antitoxin (TA) system. It is not known which gene encodes its antitoxin. This is Probable toxin y4kH from Sinorhizobium fredii (strain NBRC 101917 / NGR234).